Consider the following 118-residue polypeptide: Large ribosomal subunit protein bL20 (118 aa).

The protein belongs to the bacterial ribosomal protein bL20 family.

In terms of biological role, binds directly to 23S ribosomal RNA and is necessary for the in vitro assembly process of the 50S ribosomal subunit. It is not involved in the protein synthesizing functions of that subunit. The sequence is that of Large ribosomal subunit protein bL20 from Protochlamydia amoebophila (strain UWE25).